The chain runs to 1153 residues: uncharacterized protein (1153 aa).

Disordered regions lie at residues 164-193 (TTIK…QIDD), 224-245 (DNYD…DDDK), 294-316 (KSPQ…QSKH), 332-427 (EHKL…KNKK), 613-648 (LSML…EGEN), 683-703 (QQQQ…EEMS), 717-740 (KSDD…SKRK), 772-819 (NKKL…KTIE), 838-874 (ASSG…EDEK), and 942-1106 (NNNN…NNEV). Residues 169–179 (LPPPLPQPQPQ) are compositionally biased toward pro residues. Composition is skewed to low complexity over residues 231–240 (NNNNNNNNSN), 298–312 (KLKL…QQQK), 336–391 (QQQQ…TPKK), and 399–423 (NNVN…NNNN). The segment covering 613–625 (LSMLDSTNDGSSQ) has biased composition (polar residues). Basic and acidic residues predominate over residues 687–699 (QEKEKQQQEKQQD). The segment covering 721–734 (NNNNNDNNNNNNNN) has biased composition (low complexity). The segment covering 772–784 (NKKLRVDSEDQQT) has biased composition (basic and acidic residues). Low complexity-rich tracts occupy residues 788 to 808 (TTTT…NNNN) and 839 to 854 (SSGG…QNDS). Basic and acidic residues predominate over residues 856–874 (TTKEKERSETIKTHNEDEK). Over residues 942-987 (NNNNNNNNNINNINNIGNKNTTVNNSNHSNHSNNNINNNNIFKNSN) the composition is skewed to low complexity. 2 stretches are compositionally biased toward polar residues: residues 988–998 (PIVDTNFSSTT) and 1005–1015 (QSKIFTGNQLP). Over residues 1019 to 1059 (INNENVVNNNNNNEINNTTTTTTNNNSGIHKNNNNYNSDNS) the composition is skewed to low complexity. Residues 1064–1081 (DGLKQEKEEQKEEQKENK) are compositionally biased toward basic and acidic residues. A compositionally biased stretch (low complexity) spans 1082–1105 (NNNNNNNNNNNNNNNNNNNNNNNE).

This is an uncharacterized protein from Dictyostelium discoideum (Social amoeba).